A 3470-amino-acid polypeptide reads, in one-letter code: Mucin-4 (3470 aa).

Positions 1-28 are cleaved as a signal peptide; sequence MRGPHWRVPWLCLSCLYSCLLLLPDALA. A disordered region spans residues 32–163; it reads TQTPMSLSSS…STESTSVDSG (132 aa). Residues 37–57 show a composition bias toward low complexity; that stretch reads SLSSSTRTSQMSSQASTSSTS. Residues Thr42, Thr44, Thr65, Thr68, Thr87, Thr91, Thr96, Thr97, Thr98, Thr99, Thr100, Thr103, Thr104, Thr106, Thr117, Thr130, Thr131, Thr132, Thr145, Thr146, Thr150, Thr151, Thr152, and Thr155 are each glycosylated (O-linked (GalNAc...) threonine). Residues 43 to 2501 are variable number of tandem repeats (VNTR); the sequence is RTSQMSSQAS…ETLINDFTSS (2459 aa). The span at 66 to 85 shows a compositional bias: polar residues; sequence EQTSTRDTPSSITTVSQSHH. A compositionally biased stretch (low complexity) spans 86-111; it reads TTSMETSKPQTTTTTEVTTSTPSASS. A compositionally biased stretch (polar residues) spans 112-129; the sequence is RDQIQTETSSQRTISPDG. The span at 130–162 shows a compositional bias: low complexity; that stretch reads TTTSHAPSISSSAPSTTHMLTTTSSTESTSVDS. An N-linked (GlcNAc...) asparagine glycan is attached at Asn188. The segment covering 199–220 has biased composition (polar residues); it reads TLTQRQHTGSKQTSSKSQVNIV. Disordered stretches follow at residues 199–679, 691–925, 938–1219, 1232–1400, 1413–1524, 1537–1647, and 1660–1992; these read TLTQ…STVS, FPQS…NMST, TLPQ…MSTV, LPQS…MSTV, LPKS…NMST, and TLPQ…TEIT. Over residues 221–232 the composition is skewed to low complexity; it reads TSTLSTSTSDST. Positions 233–243 are enriched in polar residues; that stretch reads PAQTMSQVTSS. O-linked (GalNAc...) threonine glycosylation is found at Thr236 and Thr241. Over residues 251–272 the composition is skewed to low complexity; the sequence is STSGVSSTSLTTTEVLTQTSST. Residues 273–283 are compositionally biased toward polar residues; sequence DSAPGNTTLRI. Residues Asn278 and Asn286 are each glycosylated (N-linked (GlcNAc...) asparagine). The span at 284–299 shows a compositional bias: low complexity; sequence TQNSTTHTTKVSTTST. A glycan (O-linked (GalNAc...) threonine) is linked at Thr297. Polar residues predominate over residues 300–335; sequence PQKLSPVSTLINSSQKMSTLPQNQHTESMDTSRQPQ. Residue Asn311 is glycosylated (N-linked (GlcNAc...) asparagine). The segment covering 336-346 has biased composition (low complexity); it reads TTTTIEVTTST. Positions 347–448 are enriched in polar residues; it reads PSASSLHQIQ…LTSSYSQHIQ (102 aa). Thr357, Thr370, Thr371, Thr372, Thr385, and Thr423 each carry an O-linked (GalNAc...) threonine glycan. The span at 449–470 shows a compositional bias: low complexity; the sequence is SKGTSSKSQTTTNTKVNTSTPS. N-linked (GlcNAc...) asparagine glycosylation is present at Asn465. The segment covering 479-489 has biased composition (polar residues); sequence TETSSQRTNSP. Thr494 carries O-linked (GalNAc...) threonine glycosylation. The segment covering 496-510 has biased composition (low complexity); that stretch reads HAPSMSSSAPSTTHM. The span at 511–577 shows a compositional bias: polar residues; that stretch reads LSTTSSNQST…SQSQHTGSKG (67 aa). Thr513 carries an O-linked (GalNAc...) threonine glycan. Asn517 carries an N-linked (GlcNAc...) asparagine glycan. Thr542 and Thr545 each carry an O-linked (GalNAc...) threonine glycan. N-linked (GlcNAc...) asparagine glycosylation occurs at Asn550. O-linked (GalNAc...) threonine glycosylation is found at Thr551, Thr584, Thr585, Thr586, Thr587, Thr588, Thr592, Thr594, Thr599, Thr605, Thr618, Thr619, Thr620, Thr633, Thr634, Thr639, Thr640, and Thr655. The segment covering 578-599 has biased composition (low complexity); sequence TSSNPQTTTTTEVTTSTPSATT. Positions 600-631 are enriched in polar residues; that stretch reads HDQIQTETSSQNTISPGETTTSYAPIMSSSAP. A compositionally biased stretch (low complexity) spans 632–647; it reads STTHMLSTTSSTQSTS. 2 stretches are compositionally biased toward polar residues: residues 653-679 and 691-701; these read TTTL…STVS and FPQSQHTGSKG. An N-linked (GlcNAc...) asparagine glycan is attached at Asn674. Thr702, Thr708, Thr709, Thr710, Thr711, and Thr716 each carry an O-linked (GalNAc...) threonine glycan. Residues 702–723 show a composition bias toward low complexity; the sequence is TSSNPQTTTTPVVTTSNPSATS. Residue Asn718 is glycosylated (N-linked (GlcNAc...) asparagine). The segment covering 724-741 has biased composition (polar residues); the sequence is RDQIQTETSSQRTISPGE. Residues 742–772 are compositionally biased toward low complexity; the sequence is TTTSYASIMSSSAPSTTHMLTTTSSTQSTSV. Residues Thr743, Thr744, Thr757, and Thr758 are each glycosylated (O-linked (GalNAc...) threonine). Residues 780–824 are compositionally biased toward polar residues; sequence VRTQGSTPATTQVSPSSQNMSTVSTPITSTQILSTLPQSQHTGSK. Residue Asn798 is glycosylated (N-linked (GlcNAc...) asparagine). Low complexity predominate over residues 825-848; it reads GTSSNPQTTTSPVVTTSTPSGTSG. 9 O-linked (GalNAc...) threonine glycosylation sites follow: Thr826, Thr832, Thr833, Thr834, Thr839, Thr840, Thr842, Thr846, and Thr853. The segment covering 849–879 has biased composition (polar residues); it reads DQIQTETSSQRTISPGKTTTSHALNINSSAP. Asn875 carries an N-linked (GlcNAc...) asparagine glycan. Residues 880–895 are compositionally biased toward low complexity; that stretch reads STTHMLSTTSSTQSTS. 2 O-linked (GalNAc...) threonine glycosylation sites follow: Thr901 and Thr902. The segment covering 901–925 has biased composition (polar residues); sequence TTAGRTQGSTPATTQVSPSSQNMST. An N-linked (GlcNAc...) asparagine glycan is attached at Asn922. A compositionally biased stretch (low complexity) spans 948 to 968; that stretch reads KSTSTNPQTTTTPEVTTSNPS. Thr950, Thr952, Thr956, Thr957, Thr958, Thr959, Thr963, and Thr964 each carry an O-linked (GalNAc...) threonine glycan. A glycan (N-linked (GlcNAc...) asparagine) is linked at Asn966. A compositionally biased stretch (polar residues) spans 969–1003; the sequence is ATSHDQIETETSSQRTISPGETTTSYAPIMSSSAP. O-linked (GalNAc...) threonine glycans are attached at residues Thr990, Thr991, Thr992, Thr1005, Thr1006, Thr1011, Thr1012, and Thr1015. The span at 1004–1019 shows a compositional bias: low complexity; that stretch reads STTHMLSTTSSTQSTS. Polar residues predominate over residues 1020 to 1065; sequence VDTRNTTTLTTQGSTPATTQVSPSSKNMSTVSTPITSTHKLSTLPQ. The N-linked (GlcNAc...) asparagine glycan is linked to Asn1024. O-linked (GalNAc...) threonine glycosylation is found at Thr1025, Thr1026, Thr1027, Thr1029, and Thr1038. Residues Asn1046, Asn1072, and Asn1091 are each glycosylated (N-linked (GlcNAc...) asparagine). The span at 1066 to 1083 shows a compositional bias: low complexity; that stretch reads SQHTGSNGTSSSSSTPAT. Residues 1091–1120 are compositionally biased toward polar residues; that stretch reads NMSTVSTPITTTHKLSTLSQSQHTGSKGTS. Residues 1121-1140 show a composition bias toward low complexity; the sequence is SNPQTTTTPVMTTSTPSATT. Thr1125, Thr1126, Thr1127, Thr1128, Thr1132, Thr1133, Thr1135, Thr1140, Thr1174, Thr1198, and Thr1207 each carry an O-linked (GalNAc...) threonine glycan. Polar residues-rich tracts occupy residues 1141–1219 and 1232–1242; these read HDQI…MSTV and LPQSQHTGSKG. Asn1215 carries N-linked (GlcNAc...) asparagine glycosylation. Residues Thr1243, Thr1245, Thr1249, Thr1250, Thr1251, Thr1252, Thr1256, Thr1257, Thr1259, Thr1263, Thr1270, Thr1283, Thr1284, Thr1285, Thr1298, Thr1299, Thr1304, Thr1305, Thr1318, and Thr1319 are each glycosylated (O-linked (GalNAc...) threonine). The span at 1243-1264 shows a compositional bias: low complexity; that stretch reads TSTNPQTTTTPEVTTSTPSATS. Residues 1265-1296 show a composition bias toward polar residues; it reads RDQIQTETSSQRTISPGETTTSHAPIMSSSAP. Low complexity predominate over residues 1297–1312; that stretch reads STTHMLSTTSSTQSTS. Over residues 1318–1353 the composition is skewed to polar residues; sequence TTAGRTQGSTPATTQVSPSSQNMTTTSHALMSSSAP. Asn1339 is a glycosylation site (N-linked (GlcNAc...) asparagine). O-linked (GalNAc...) threonine glycosylation is found at Thr1341, Thr1342, Thr1355, Thr1356, Thr1365, Thr1368, Thr1372, Thr1375, Thr1376, Thr1377, and Thr1379. The segment covering 1354-1390 has biased composition (low complexity); it reads STTHMLSTTSSTQSTSVDTRHTTTVTTQGSTPATTQV. Composition is skewed to polar residues over residues 1391-1400 and 1413-1477; these read LPSSQNMSTV and LPQS…SSAP. The N-linked (GlcNAc...) asparagine glycan is linked to Asn1396. Residues Thr1426, Thr1430, Thr1431, Thr1440, Thr1451, Thr1453, Thr1464, Thr1465, and Thr1466 are each glycosylated (O-linked (GalNAc...) threonine). A glycan (N-linked (GlcNAc...) asparagine) is linked at Asn1471. The segment covering 1478–1489 has biased composition (low complexity); that stretch reads STTHMLSSTSST. Residues Thr1479, Thr1480, Thr1499, and Thr1512 are each glycosylated (O-linked (GalNAc...) threonine). Composition is skewed to polar residues over residues 1490–1524 and 1537–1553; these read QITS…MSTV and LPKS…SNPQ. N-linked (GlcNAc...) asparagine glycosylation is present at Asn1520. Thr1554, Thr1555, Thr1557, and Thr1562 each carry an O-linked (GalNAc...) threonine glycan. A compositionally biased stretch (low complexity) spans 1554-1569; sequence TTITPVVTTSTPSASS. Residues 1570–1587 are compositionally biased toward polar residues; it reads RDQIQTETSFQRTISPGE. O-linked (GalNAc...) threonine glycosylation is found at Thr1588, Thr1589, Thr1590, Thr1604, Thr1609, Thr1627, Thr1635, and Thr1636. Low complexity predominate over residues 1588–1609; the sequence is TTTSHAPSMSSSAPSSTHMLST. Positions 1610-1647 are enriched in polar residues; sequence ASSTQITSVDTRHTTAITTQGSTPATTQVSPSSQNMST. Residue Asn1644 is glycosylated (N-linked (GlcNAc...) asparagine). Low complexity predominate over residues 1670–1693; the sequence is KSTSTNPQTTTTPRVTTSTPSASS. 11 O-linked (GalNAc...) threonine glycosylation sites follow: Thr1672, Thr1674, Thr1678, Thr1679, Thr1680, Thr1681, Thr1685, Thr1686, Thr1688, Thr1699, and Thr1714. The span at 1694–1725 shows a compositional bias: polar residues; the sequence is RDQIQTETSSQRTISPGKTTTSHVPNMNSSAP. N-linked (GlcNAc...) asparagine glycosylation occurs at Asn1721. Residues 1726 to 1742 show a composition bias toward low complexity; the sequence is STTHILSTTSSIQSTSG. A compositionally biased stretch (polar residues) spans 1747-1837; the sequence is TTAVRTQGST…SSQRTISPGE (91 aa). A glycan (N-linked (GlcNAc...) asparagine) is linked at Asn1770. 9 O-linked (GalNAc...) threonine glycosylation sites follow: Thr1838, Thr1839, Thr1840, Thr1854, Thr1873, Thr1874, Thr1888, Thr1889, and Thr1891. Low complexity predominate over residues 1838–1859; it reads TTTSHASSLSSSAPSSTHMLST. A compositionally biased stretch (polar residues) spans 1860-1877; sequence ASSTEITSGDTRHTTAIV. The segment covering 1878-1895 has biased composition (low complexity); it reads TQGSTPATTQTTLTPSSQ. N-linked (GlcNAc...) asparagine glycosylation is present at Asn1896. Polar residues predominate over residues 1896 to 1927; the sequence is NMSTVSTPITSTHKLSPLPQSQHTENMGTSSN. The span at 1928 to 1945 shows a compositional bias: low complexity; it reads PQTTTTPEVTTSTPSATS. Residues Thr1930, Thr1931, Thr1932, Thr1933, Thr1937, Thr1938, Thr1940, Thr1964, Thr1965, Thr1966, and Thr1980 are each glycosylated (O-linked (GalNAc...) threonine). The span at 1946-1992 shows a compositional bias: polar residues; the sequence is YDQIQTETSFQRTISPGETTTSHAPSMSNSAPSSTHKLSTASSTEIT. Residue Asn2022 is glycosylated (N-linked (GlcNAc...) asparagine). A compositionally biased stretch (polar residues) spans 2037-2055; it reads STLRQSQHTGSKGTSSNHQ. Disordered regions lie at residues 2037 to 2107, 2139 to 2185, 2205 to 2237, and 2262 to 2368; these read STLR…NTTH, QVSL…NITP, TMSW…ILTS, and TSTS…TVPL. O-linked (GalNAc...) threonine glycosylation is found at Thr2056 and Thr2057. Low complexity predominate over residues 2056-2071; that stretch reads TTTTPVVTTSTSSATS. Positions 2072-2089 are enriched in polar residues; that stretch reads RDQIQTETSSLRTISPDG. 3 O-linked (GalNAc...) threonine glycosylation sites follow: Thr2090, Thr2091, and Thr2092. Positions 2090 to 2107 are enriched in low complexity; the sequence is TTTSHASSMSSSSPNTTH. N-linked (GlcNAc...) asparagine glycosylation occurs at Asn2104. Thr2105 and Thr2106 each carry an O-linked (GalNAc...) threonine glycan. N-linked (GlcNAc...) asparagine glycosylation is found at Asn2148, Asn2182, and Asn2225. 2 stretches are compositionally biased toward polar residues: residues 2205–2229 and 2262–2303; these read TMSW…TSPA and TSTS…QTSI. O-linked (GalNAc...) threonine glycans are attached at residues Thr2264, Thr2352, Thr2354, Thr2359, and Thr2360. Over residues 2344-2367 the composition is skewed to low complexity; that stretch reads TAVSATSSTLTSPSPTTASRSTVP. The NIDO domain maps to 2458 to 2613; the sequence is PFWADADFSS…GLQVYRLHRE (156 aa). The AMOP domain maps to 2614–2726; the sequence is ERPNYRLKCL…SFCVWYQLRR (113 aa). The region spanning 2738-2937 is the VWFD domain; the sequence is RPAWTFGDPH…TWHVNGTGLL (200 aa). N-linked (GlcNAc...) asparagine glycosylation is found at Asn2755, Asn2773, Asn2801, Asn2827, Asn2844, Asn2853, Asn2888, Asn2909, Asn2916, Asn2932, Asn2958, Asn2985, Asn3003, Asn3014, Asn3054, Asn3079, Asn3102, Asn3109, Asn3157, and Asn3174. The 40-residue stretch at 3173–3212 folds into the EGF-like 1 domain; the sequence is PNRSCPMNYCYNNGHCDISEAPGCQPTCTCPPAFTDNRCF. 3 cysteine pairs are disulfide-bonded: Cys3177/Cys3188, Cys3182/Cys3200, and Cys3202/Cys3211. Asn3240, Asn3247, and Asn3353 each carry an N-linked (GlcNAc...) asparagine glycan. An EGF-like 2 domain is found at 3382–3421; the sequence is VSPCSEGYCHNGGQCKHLPDGPQCSCASFTIYSSSGEHCE. Disulfide bonds link Cys3385/Cys3396, Cys3390/Cys3405, and Cys3407/Cys3420. The helical transmembrane segment at 3432 to 3452 threads the bilayer; it reads GILFGTLGALLLLGILAFMIF.

In terms of assembly, a heterodimeric complex, composed of a mucin-4 alpha chain and a cysteine-rich transmembrane mucin-4 beta chain. Mucin-4 beta chain interacts with ERBB2 via the EGF-like domain 1. In nonpolarized cells, associates with ERBB2 and ERBB3. In terms of processing, proteolytically cleaved into 2 chains, mucin-4 alpha chain and mucin-4 beta chain. Post-translationally, highly O-glycosylated. Predominantly N-glycosylated. Expressed in trachea, duodenum and intestine. Lower expression in stomach, salivary glands, liver, gallbladder, and kidney.

The protein resides in the cell membrane. It localises to the secreted. In terms of biological role, membrane-bound mucin, a family of highly glycosylated proteins that constitute the major component of the mucus, the slimy and viscous secretion covering epithelial surfaces. These glycoproteins play important roles in the protection of the epithelium and are implicated in epithelial renewal and differentiation. Regulates cellular behavior through both anti-adhesive effects on cell-cell and cell-extracellular matrix interactions and its ability to act as an intramembrane ligand for ERBB2. Plays an important role in proliferation and differentiation of epithelial cells by inducing specific phosphorylation of ERBB2. In polarized epithelial cells, segregates ERBB2 and other ERBB receptors and prevents ERBB2 from acting as a coreceptor. The interaction with ERBB2 leads to enhanced expression of CDKN1B. The formation of a MUC4-ERBB2-ERBB3-NRG1 complex leads to down-regulation of CDKN1B, resulting in repression of apoptosis and stimulation of proliferation. Its ability to promote tumor growth may be mainly due to repression of apoptosis as opposed to proliferation. The protein is Mucin-4 (Muc4) of Mus musculus (Mouse).